The sequence spans 416 residues: Phosphatidylinositol 5-phosphate 4-kinase type-2 beta (416 aa).

Residue serine 2 is modified to N-acetylserine. A Phosphothreonine modification is found at threonine 8. Serine 19 carries the post-translational modification Phosphoserine. The 378-residue stretch at 38-415 (ASEPILSVLM…RFNEFMSNIL (378 aa)) folds into the PIPK domain. A required for interaction with PIP5K1A region spans residues 64-70 (VMLMPDD). An N6-acetyllysine mark is found at lysine 94 and lysine 150. ATP contacts are provided by residues 202 to 204 (RNV) and lysine 214. Residues 203 to 204 (NV) and lysine 214 contribute to the GTP site. Threonine 322 carries the phosphothreonine modification. At serine 326 the chain carries Phosphoserine. Aspartate 369 provides a ligand contact to GTP.

As to quaternary structure, homodimer. Binds TNFRSF1A. Interacts with PIP4K2A; the interaction suppresses ubiquitination by the SPOP/CUL3 complex. Probably interacts with PIP5K1A; the interaction inhibits PIP5K1A kinase activity. Ubiquitinated by the SPOP/CUL3 complex. Ubiquitination is stimulated by PtdIns5P levels. Post-translationally, phosphorylated on serine residues.

The protein resides in the endoplasmic reticulum membrane. Its subcellular location is the cell membrane. It is found in the nucleus. It localises to the cytoplasm. It catalyses the reaction a 1,2-diacyl-sn-glycero-3-phospho-(1D-myo-inositol-5-phosphate) + ATP = a 1,2-diacyl-sn-glycero-3-phospho-(1D-myo-inositol-4,5-bisphosphate) + ADP + H(+). The catalysed reaction is 1,2-dihexadecanoyl-sn-glycero-3-phospho-(1D-myo-inositol-5-phosphate) + ATP = 1,2-dihexadecanoyl-sn-glycero-3-phospho-(1D-myo-inositol-4,5-bisphosphate) + ADP + H(+). It carries out the reaction 1,2-dihexadecanoyl-sn-glycero-3-phospho-(1D-myo-inositol-5-phosphate) + GTP = 1,2-dihexadecanoyl-sn-glycero-3-phospho-(1D-myo-inositol-4,5-bisphosphate) + GDP + H(+). Its function is as follows. Participates in the biosynthesis of phosphatidylinositol 4,5-bisphosphate. Preferentially utilizes GTP, rather than ATP, for PI(5)P phosphorylation and its activity reflects changes in direct proportion to the physiological GTP concentration. Its GTP-sensing activity is critical for metabolic adaptation. In collaboration with PIP4K2A, has a role in mediating autophagy in times of nutrient stress. Required for autophagosome-lysosome fusion and the regulation of cellular lipid metabolism. PIP4Ks negatively regulate insulin signaling through a catalytic-independent mechanism. They interact with PIP5Ks and suppress PIP5K-mediated PtdIns(4,5)P2 synthesis and insulin-dependent conversion to PtdIns(3,4,5)P3. This Mus musculus (Mouse) protein is Phosphatidylinositol 5-phosphate 4-kinase type-2 beta.